The sequence spans 145 residues: Regulator of sigma D (145 aa).

This sequence belongs to the Rsd/AlgQ family. Interacts with RpoD.

It localises to the cytoplasm. Functionally, binds RpoD and negatively regulates RpoD-mediated transcription activation by preventing the interaction between the primary sigma factor RpoD with the catalytic core of the RNA polymerase and with promoter DNA. May be involved in replacement of the RNA polymerase sigma subunit from RpoD to RpoS during the transition from exponential growth to the stationary phase. In Sodalis glossinidius (strain morsitans), this protein is Regulator of sigma D.